A 280-amino-acid chain; its full sequence is 4-diphosphocytidyl-2-C-methyl-D-erythritol kinase (280 aa).

Lysine 8 is an active-site residue. ATP is bound at residue 91-101 (PVAAGLAGGST). Aspartate 133 is a catalytic residue.

Belongs to the GHMP kinase family. IspE subfamily.

It carries out the reaction 4-CDP-2-C-methyl-D-erythritol + ATP = 4-CDP-2-C-methyl-D-erythritol 2-phosphate + ADP + H(+). Its pathway is isoprenoid biosynthesis; isopentenyl diphosphate biosynthesis via DXP pathway; isopentenyl diphosphate from 1-deoxy-D-xylulose 5-phosphate: step 3/6. Its function is as follows. Catalyzes the phosphorylation of the position 2 hydroxy group of 4-diphosphocytidyl-2C-methyl-D-erythritol. In Clostridium botulinum (strain Loch Maree / Type A3), this protein is 4-diphosphocytidyl-2-C-methyl-D-erythritol kinase.